The chain runs to 683 residues: U4/U6 small nuclear ribonucleoprotein Prp3 (683 aa).

The 87-residue stretch at 1–87 folds into the PWI domain; that stretch reads MALSKRELDE…HSKSSSDRSR (87 aa). Positions 73 to 107 are enriched in basic and acidic residues; that stretch reads GRSSRHSKSSSDRSRKRDLKEVFGDDSEISKESSG. The segment at 73 to 135 is disordered; sequence GRSSRHSKSS…IPGPPSESPG (63 aa). K139 is covalently cross-linked (Glycyl lysine isopeptide (Lys-Gly) (interchain with G-Cter in SUMO2)). Residues 153–183 are disordered; the sequence is IEERKKQLSFISPPTPQPKTPSSSQPERLPI. S164 carries the post-translational modification Phosphoserine. T167 carries the post-translational modification Phosphothreonine. Glycyl lysine isopeptide (Lys-Gly) (interchain with G-Cter in SUMO2) cross-links involve residues K244 and K252. The segment at 416 to 550 is mediates interaction with SART3; the sequence is NLVEHPAQLN…VHISVYRVRN (135 aa). S619 is subject to Phosphoserine.

In terms of assembly, component of the precatalytic spliceosome (spliceosome B complex). Component of the U4/U6-U5 tri-snRNP complex, a building block of the precatalytic spliceosome (spliceosome B complex). The U4/U6-U5 tri-snRNP complex is composed of the U4, U6 and U5 snRNAs and at least PRPF3, PRPF4, PRPF6, PRPF8, PRPF31, SNRNP200, TXNL4A, SNRNP40, SNRPB, SNRPD1, SNRPD2, SNRPD3, SNRPE, SNRPF, SNRPG, DDX23, CD2BP2, PPIH, SNU13, EFTUD2, SART1 and USP39, plus LSM2, LSM3, LSM4, LSM5, LSM6, LSM7 and LSM8. Interacts directly with PRPF4. Part of a heteromeric complex containing PPIH, PRPF3 and PRPF4 that is stable in the absence of RNA. Interacts with SART3; the interaction is direct and recruits the deubiquitinase USP4 to PRPF3. Interacts with PRPF19. Interacts ('Lys-63'-linked polyubiquitinated) with PRPF8 (via the MPN (JAB/Mov34) domain); may stabilize the U4/U6-U5 tri-snRNP complex. Interacts with ERCC6. Post-translationally, ubiquitinated. Undergoes 'Lys-63'-linked polyubiquitination by PRPF19 and deubiquitination by USP4. 'Lys-63'-linked ubiquitination increases the affinity for PRPF8 and may regulate the assembly of the U4/U6-U5 tri-snRNP complex.

It is found in the nucleus. Its subcellular location is the nucleus speckle. Functionally, plays a role in pre-mRNA splicing as component of the U4/U6-U5 tri-snRNP complex that is involved in spliceosome assembly, and as component of the precatalytic spliceosome (spliceosome B complex). In Bos taurus (Bovine), this protein is U4/U6 small nuclear ribonucleoprotein Prp3 (PRPF3).